A 67-amino-acid chain; its full sequence is MLSLDFNNELIKAAPIVGTGVADVSARLFFGLSLNEWFYVAAIAYTVVQIGAKVVDKMIDWKKANKE.

The Cytoplasmic portion of the chain corresponds to 1–36 (MLSLDFNNELIKAAPIVGTGVADVSARLFFGLSLNE). The helical; Signal-anchor for type II membrane protein transmembrane segment at 37–55 (WFYVAAIAYTVVQIGAKVV) threads the bilayer. At 56-67 (DKMIDWKKANKE) the chain is on the periplasmic side.

This sequence belongs to the T7likevirus holin family. In terms of assembly, homomultimer.

It localises to the host cell inner membrane. Its function is as follows. Accumulates harmlessly in the cytoplasmic membrane until it reaches a critical concentration that triggers the formation of micron-scale pores (holes) causing host cell membrane disruption and endolysin escape into the periplasmic space. Participates in determining the precise timing of host cell lysis. Participates with the endolysin and spanin proteins in the sequential events which lead to the programmed host cell lysis releasing the mature viral particles from the host cell. This Escherichia phage T7 (Bacteriophage T7) protein is Holin.